The chain runs to 435 residues: Trigger factor (435 aa).

A PPIase FKBP-type domain is found at 163–248 (GELASVTFSA…VHAVKERKMP (86 aa)).

Belongs to the FKBP-type PPIase family. Tig subfamily.

Its subcellular location is the cytoplasm. It catalyses the reaction [protein]-peptidylproline (omega=180) = [protein]-peptidylproline (omega=0). Involved in protein export. Acts as a chaperone by maintaining the newly synthesized protein in an open conformation. Functions as a peptidyl-prolyl cis-trans isomerase. In Maridesulfovibrio salexigens (strain ATCC 14822 / DSM 2638 / NCIMB 8403 / VKM B-1763) (Desulfovibrio salexigens), this protein is Trigger factor.